Here is a 305-residue protein sequence, read N- to C-terminus: Heme A synthase (305 aa).

The Cytoplasmic portion of the chain corresponds to 1–6 (MKKFLK). A helical membrane pass occupies residues 7–27 (VWSVLTIICMTVVVFGGALVT). The Extracellular portion of the chain corresponds to 28-63 (KTGSADGCGNSWPLCNGQLVRLTDVTPEKLIEFMHR). A disulfide bridge links cysteine 35 with cysteine 42. The active site involves glutamate 59. Heme o is bound at residue histidine 62. A helical membrane pass occupies residues 64–84 (MTTGISSIFVIVLAICAWIYM). The Cytoplasmic segment spans residues 85-92 (KNRRETKP). The helical transmembrane segment at 93–113 (LAIIAVLFLIIQALMGMAAVV) threads the bilayer. Topologically, residues 114-122 (WGQNPYIMA) are extracellular. Residues 123–143 (LHFGISIICYASIVLLALMIF) form a helical membrane-spanning segment. Heme o is bound at residue histidine 124. Residues 144 to 160 (EVDRKFDARNLVMGTKL) are Cytoplasmic-facing. The helical transmembrane segment at 161 to 181 (RINIYALTIYTYLAVYTGALV) threads the bilayer. Residues 182 to 212 (RHEKASMAVPVWPFENGHFIMPTSVQDYVQY) are Extracellular-facing. A helical transmembrane segment spans residues 213–233 (FHRLAAFILIVWLLYVTWLVF). Histidine 214 provides a ligand contact to heme b. Residues 234–240 (RDYRRYR) lie on the Cytoplasmic side of the membrane. A helical membrane pass occupies residues 241-261 (VLTFSMVLSLVFIALQAVTGA). At 262–271 (LSVYTGVNLY) the chain is on the extracellular side. The chain crosses the membrane as a helical span at residues 272 to 292 (IALAHSLIITMLFALLCYLCL). Histidine 276 is a binding site for heme b. Residues 293-305 (LASRSKSNRLRIK) are Cytoplasmic-facing.

The protein belongs to the COX15/CtaA family. Type 1 subfamily. In terms of assembly, interacts with CtaB. It depends on heme b as a cofactor.

The protein resides in the cell membrane. The catalysed reaction is Fe(II)-heme o + 2 A + H2O = Fe(II)-heme a + 2 AH2. Its pathway is porphyrin-containing compound metabolism; heme A biosynthesis; heme A from heme O: step 1/1. In terms of biological role, catalyzes the conversion of heme O to heme A by two successive hydroxylations of the methyl group at C8. The first hydroxylation forms heme I, the second hydroxylation results in an unstable dihydroxymethyl group, which spontaneously dehydrates, resulting in the formyl group of heme A. This is Heme A synthase from Listeria monocytogenes serotype 4b (strain F2365).